Consider the following 72-residue polypeptide: Translation initiation factor IF-1 (72 aa).

The region spanning 1–72 (MTKEDSFEMH…SKGRIIFRSR (72 aa)) is the S1-like domain.

The protein belongs to the IF-1 family. As to quaternary structure, component of the 30S ribosomal translation pre-initiation complex which assembles on the 30S ribosome in the order IF-2 and IF-3, IF-1 and N-formylmethionyl-tRNA(fMet); mRNA recruitment can occur at any time during PIC assembly.

The protein resides in the cytoplasm. Functionally, one of the essential components for the initiation of protein synthesis. Stabilizes the binding of IF-2 and IF-3 on the 30S subunit to which N-formylmethionyl-tRNA(fMet) subsequently binds. Helps modulate mRNA selection, yielding the 30S pre-initiation complex (PIC). Upon addition of the 50S ribosomal subunit IF-1, IF-2 and IF-3 are released leaving the mature 70S translation initiation complex. This is Translation initiation factor IF-1 from Blochmanniella pennsylvanica (strain BPEN).